The primary structure comprises 499 residues: NAD(P)H-quinone oxidoreductase chain 4, chloroplastic (499 aa).

14 helical membrane passes run phenylalanine 4–leucine 24, tyrosine 35–phenylalanine 55, glycine 84–alanine 104, serine 111–phenylalanine 129, leucine 134–valine 154, phenylalanine 167–leucine 187, alanine 208–isoleucine 228, histidine 242–isoleucine 262, alanine 272–alanine 292, isoleucine 305–aspartate 325, glycine 330–glycine 350, leucine 386–threonine 406, isoleucine 416–methionine 436, and leucine 462–valine 482.

This sequence belongs to the complex I subunit 4 family.

The protein resides in the plastid. Its subcellular location is the chloroplast thylakoid membrane. The catalysed reaction is a plastoquinone + NADH + (n+1) H(+)(in) = a plastoquinol + NAD(+) + n H(+)(out). It carries out the reaction a plastoquinone + NADPH + (n+1) H(+)(in) = a plastoquinol + NADP(+) + n H(+)(out). The polypeptide is NAD(P)H-quinone oxidoreductase chain 4, chloroplastic (Citrus sinensis (Sweet orange)).